Here is a 191-residue protein sequence, read N- to C-terminus: Penicillin-binding protein activator LpoB (191 aa).

The first 16 residues, 1 to 16 (MKRYLSLALAALVLTG), serve as a signal peptide directing secretion. The N-palmitoyl cysteine moiety is linked to residue cysteine 17. Cysteine 17 carries S-diacylglycerol cysteine lipidation.

Belongs to the LpoB family. Interacts with PBP1b.

Its subcellular location is the cell outer membrane. Its function is as follows. Regulator of peptidoglycan synthesis that is essential for the function of penicillin-binding protein 1B (PBP1b). The sequence is that of Penicillin-binding protein activator LpoB from Yersinia pestis (strain D182038).